The following is a 934-amino-acid chain: Replication factor C subunit 1 (934 aa).

A disordered region spans residues 1–190 (MSNSDIRSFF…RSSKSKGLPR (190 aa)). At Ser-27 the chain carries Phosphoserine. Residues 29–39 (KPKRSLKKKRI) show a composition bias toward basic residues. Residues 89–104 (GVSTTPDEYFEQQSTR) are compositionally biased toward polar residues. Over residues 118–128 (TTSKDVVHPVK) the composition is skewed to basic and acidic residues. The span at 165-186 (TSKSKSHTTTATTHTSRSSKSK) shows a compositional bias: low complexity. Positions 236–326 (GNSDCLSGIS…PASGGTGAAA (91 aa)) constitute a BRCT domain. ATP is bound by residues Thr-362, Cys-374, 416–423 (GPPGIGKT), and Asn-519. Over residues 876–895 (AEDEMLEEASDSEAANEEDI) the composition is skewed to acidic residues. Positions 876–934 (AEDEMLEEASDSEAANEEDIDLSKDKFISVPKKPKKRTKAKAEASSSSSTSRRSRKKTA) are disordered.

This sequence belongs to the activator 1 large subunit family. As to quaternary structure, heteropentamer of subunits rfc1, rfc2, rfc3, rfc4 and rfc5 that forms a complex (RFC) with PCNA in the presence of ATP. Interacts with cdc24.

It localises to the nucleus. The protein localises to the nucleolus. In terms of biological role, the elongation of primed DNA templates by DNA polymerase delta and epsilon requires the action of the accessory proteins PCNA and activator 1. Subunit 1 is essential for cell cycle progression. It may associate with components of the DNA replication machinery and serve to enhance the efficiency of DNA replication. The chain is Replication factor C subunit 1 (rfc1) from Schizosaccharomyces pombe (strain 972 / ATCC 24843) (Fission yeast).